The chain runs to 613 residues: Laccase 1 (613 aa).

An N-terminal signal peptide occupies residues 1–20; sequence MSRFARLLLIVALFFTGAWA. 2 Plastocyanin-like domains span residues 29–142 and 171–359; these read ITWK…IRPK and YLVV…MRIP. N74 carries N-linked (GlcNAc...) asparagine glycosylation. Residues H78, H80, H122, and H124 each coordinate Cu cation. N-linked (GlcNAc...) asparagine glycans are attached at residues N256, N279, N444, N468, and N484. Positions 468–598 constitute a Plastocyanin-like 3 domain; sequence NATRDTENDG…GGMGIAILDG (131 aa). The Cu cation site is built by H506, H509, and H511. N526 is a glycosylation site (N-linked (GlcNAc...) asparagine). Cu cation contacts are provided by H580, C581, H582, and H586.

Belongs to the multicopper oxidase family. Cu cation is required as a cofactor.

Its subcellular location is the cell surface. Its pathway is pigment biosynthesis. Functionally, laccase; part of the Pks1 gene cluster that mediates the biosynthesis of an anthraquinone derivative pigment that contributes to conidial pigmentation that provides protection from UV radiation, heat and cold stress. The polyketide synthase Pks1 produces 1-acetyl-2,4,6,8-tetrahydroxy-9,10-anthraquinone though condensation of acetyl-CoA with malonyl-CoA. The dehydratase EthD and the laccase Mlac1 further convert the anthraquinone derivative into the final conidial pigment. This is Laccase 1 from Metarhizium guizhouense (strain ARSEF 977).